Consider the following 137-residue polypeptide: Mandibular organ-inhibiting hormone (137 aa).

The signal sequence occupies residues 1 to 26; sequence MTTKCTVMAVVLAACICLQVLPQAYG. The residue at position 63 (glutamine 63) is a Pyrrolidone carboxylic acid. 3 disulfide bridges follow: cysteine 69–cysteine 105, cysteine 85–cysteine 101, and cysteine 88–cysteine 114. Valine 134 carries the post-translational modification Valine amide.

This sequence belongs to the arthropod CHH/MIH/GIH/VIH hormone family. Produced by the medulla terminalis X-organ in the eyestalks and transported to the sinus gland where it is stored and released.

It localises to the secreted. Represses the synthesis of methyl farnesoate, the precursor of insect juvenile hormone III in the mandibular organ. Also has hyperglycemic activity. This chain is Mandibular organ-inhibiting hormone, found in Libinia emarginata (Portly spider crab).